The sequence spans 340 residues: Protein pelota homolog (340 aa).

This sequence belongs to the eukaryotic release factor 1 family. Pelota subfamily. As to quaternary structure, monomer. Requires a divalent metal cation as cofactor.

The protein resides in the cytoplasm. In terms of biological role, may function in recognizing stalled ribosomes, interact with stem-loop structures in stalled mRNA molecules, and effect endonucleolytic cleavage of the mRNA. May play a role in the release non-functional ribosomes and degradation of damaged mRNAs. Has endoribonuclease activity. This is Protein pelota homolog from Methanosphaerula palustris (strain ATCC BAA-1556 / DSM 19958 / E1-9c).